Here is a 540-residue protein sequence, read N- to C-terminus: Sesquiterpene synthase 15b (540 aa).

Mg(2+)-binding residues include Asp292, Asp296, and Glu445. The DDXXD motif motif lies at 292 to 296 (DDIYD).

It belongs to the terpene synthase family. Tpsa subfamily. Mg(2+) serves as cofactor. Requires Mn(2+) as cofactor.

It catalyses the reaction (2E,6E)-farnesyl diphosphate = germacrene A + diphosphate. The protein operates within secondary metabolite biosynthesis; terpenoid biosynthesis. In terms of biological role, sesquiterpene synthase involved in the biosynthesis of volatile compounds. Mediates the conversion of (2E,6E)-farnesyl diphosphate (FPP) into germacrene A. The sequence is that of Sesquiterpene synthase 15b from Solanum habrochaites (Wild tomato).